Here is a 220-residue protein sequence, read N- to C-terminus: Large ribosomal subunit protein uL16 (220 aa).

Belongs to the universal ribosomal protein uL16 family. Component of the small ribosomal subunit. Mature ribosomes consist of a small (40S) and a large (60S) subunit. The 40S subunit contains about 33 different proteins and 1 molecule of RNA (18S). The 60S subunit contains about 49 different proteins and 3 molecules of RNA (25S, 5.8S and 5S).

The chain is Large ribosomal subunit protein uL16 (RPL10) from Vitis riparia (Frost grape).